Reading from the N-terminus, the 1000-residue chain is Receptor-type tyrosine-protein kinase FLT3 (1000 aa).

Positions 1–27 (MRALAQRSDRRLLLLVVLSVMILETVT) are cleaved as a signal peptide. The Extracellular segment spans residues 28–544 (NQDLPVIKCV…PFPFIQDNIS (517 aa)). 2 cysteine pairs are disulfide-bonded: Cys-36/Cys-66 and Cys-104/Cys-115. An N-linked (GlcNAc...) asparagine glycan is attached at Asn-44. The interval 45 to 67 (GSSAGKPSSYRMVRGSPEDLQCT) is disordered. N-linked (GlcNAc...) asparagine glycosylation is found at Asn-133 and Asn-152. 2 disulfides stabilise this stretch: Cys-200/Cys-207 and Cys-273/Cys-331. Residues 254–344 (PQSTLPQLFL…KHPSQSALVT (91 aa)) form the Ig-like C2-type domain. Asn-307, Asn-324, and Asn-352 each carry an N-linked (GlcNAc...) asparagine glycan. Intrachain disulfides connect Cys-369-Cys-408 and Cys-382-Cys-393. 4 N-linked (GlcNAc...) asparagine glycosylation sites follow: Asn-445, Asn-474, Asn-503, and Asn-542. The helical transmembrane segment at 545–564 (FYATIGLCLPFIVVLIVLIC) threads the bilayer. The Cytoplasmic segment spans residues 565 to 992 (HKYKKQFRYE…GSEPPSPQAQ (428 aa)). At Tyr-573 the chain carries Phosphotyrosine. Ser-575 carries the post-translational modification Phosphoserine. Phosphotyrosine; by autocatalysis is present on residues Tyr-590 and Tyr-592. Residues 592-598 (YVDFRDY) are important for normal regulation of the kinase activity and for maintaining the kinase in an inactive state in the absence of ligand binding. At Tyr-600 the chain carries Phosphotyrosine. The Protein kinase domain maps to 611–946 (LEFGKVLGSG…PSFPNLTSFL (336 aa)). Residues 617-625 (LGSGAFGRV) and Lys-645 contribute to the ATP site. A Phosphotyrosine; by autocatalysis modification is found at Tyr-727. Position 760 is a phosphoserine (Ser-760). Phosphotyrosine occurs at positions 769 and 796. Residue Asp-814 is the Proton acceptor of the active site. The residue at position 845 (Tyr-845) is a Phosphotyrosine; by autocatalysis. Phosphotyrosine occurs at positions 958 and 972. The tract at residues 968–1000 (HPSIYQNRRPLSREAGSEPPSPQAQVKIHRERS) is disordered. Ser-1000 is subject to Phosphoserine.

The protein belongs to the protein kinase superfamily. Tyr protein kinase family. CSF-1/PDGF receptor subfamily. Monomer in the absence of bound FLT3LG. Homodimer in the presence of bound FLT3LG. Interacts with FIZ1 following ligand activation. Interacts with FES, FER, LYN, FGR, HCK, SRC and GRB2. Interacts with PTPRJ/DEP-1 and PTPN11/SHP2. Interacts with RNF115 and RNF126. N-glycosylated, contains complex N-glycans with sialic acid. In terms of processing, autophosphorylated on several tyrosine residues in response to FLT3LG binding. FLT3LG binding also increases phosphorylation of mutant kinases that are constitutively activated. Dephosphorylated by PTPRJ/DEP-1, PTPN1, PTPN6/SHP-1, and to a lesser degree by PTPN12. Dephosphorylation is important for export from the endoplasmic reticulum and location at the cell membrane. Post-translationally, rapidly ubiquitinated by UBE2L6 and the E3 ubiquitin-protein ligase SIAH1 after autophosphorylation, leading to its proteasomal degradation. Hematopoietic stem and progenitor cell-enriched populations. Found in brain, placenta and testis.

Its subcellular location is the membrane. It localises to the endoplasmic reticulum lumen. The enzyme catalyses L-tyrosyl-[protein] + ATP = O-phospho-L-tyrosyl-[protein] + ADP + H(+). With respect to regulation, present in an inactive conformation in the absence of bound ligand. FLT3LG binding leads to dimerization and activation by autophosphorylation. In terms of biological role, tyrosine-protein kinase that acts as a cell-surface receptor for the cytokine FLT3LG and regulates differentiation, proliferation and survival of hematopoietic progenitor cells and of dendritic cells. Promotes phosphorylation of SHC1 and AKT1, and activation of the downstream effector MTOR. Promotes activation of RAS signaling and phosphorylation of downstream kinases, including MAPK1/ERK2 and/or MAPK3/ERK1. Promotes phosphorylation of FES, FER, PTPN6/SHP, PTPN11/SHP-2, PLCG1, and STAT5A and/or STAT5B. Activation of wild-type FLT3 causes only marginal activation of STAT5A or STAT5B. Mutations that cause constitutive kinase activity promote cell proliferation and resistance to apoptosis via the activation of multiple signaling pathways. This chain is Receptor-type tyrosine-protein kinase FLT3 (Flt3), found in Mus musculus (Mouse).